The following is a 324-amino-acid chain: tRNA N6-adenosine threonylcarbamoyltransferase (324 aa).

Positions 107, 111, and 128 each coordinate Fe cation. Substrate-binding positions include 128 to 132, Asp160, Gly173, Glu177, and Asn256; that span reads YVSGG. Asp284 lines the Fe cation pocket.

The protein belongs to the KAE1 / TsaD family. Monomer. Component of the KEOPS complex that consists of Kae1, Bud32, Cgi121 and Pcc1; the whole complex dimerizes. Fe(2+) is required as a cofactor.

It is found in the cytoplasm. It carries out the reaction L-threonylcarbamoyladenylate + adenosine(37) in tRNA = N(6)-L-threonylcarbamoyladenosine(37) in tRNA + AMP + H(+). Its function is as follows. Required for the formation of a threonylcarbamoyl group on adenosine at position 37 (t(6)A37) in tRNAs that read codons beginning with adenine. Is a component of the KEOPS complex that is probably involved in the transfer of the threonylcarbamoyl moiety of threonylcarbamoyl-AMP (TC-AMP) to the N6 group of A37. Kae1 likely plays a direct catalytic role in this reaction, but requires other protein(s) of the complex to fulfill this activity. The polypeptide is tRNA N6-adenosine threonylcarbamoyltransferase (Methanothrix thermoacetophila (strain DSM 6194 / JCM 14653 / NBRC 101360 / PT) (Methanosaeta thermophila)).